Here is a 149-residue protein sequence, read N- to C-terminus: MSFKGRSYRSLDPKGRLMLPPEVRDALLAVSPEGRVSLTTFDGCLVAYTPEDWEKFEAGFARIKNPSRKMRDFRRLVIGGVEELCVDKQGRVKLSRAHMEYAGITKKVVIVGQGSRFEIWSEEELEAVIGQDFGDVTDELAESGVDFPI.

2 consecutive SpoVT-AbrB domains span residues 6-52 (RSYR…TPED) and 81-124 (VEEL…SEEE).

The protein belongs to the MraZ family. In terms of assembly, forms oligomers.

The protein resides in the cytoplasm. It localises to the nucleoid. This chain is Transcriptional regulator MraZ, found in Oleidesulfovibrio alaskensis (strain ATCC BAA-1058 / DSM 17464 / G20) (Desulfovibrio alaskensis).